Reading from the N-terminus, the 189-residue chain is Elongation factor P (189 aa).

Belongs to the elongation factor P family.

The protein resides in the cytoplasm. The protein operates within protein biosynthesis; polypeptide chain elongation. Involved in peptide bond synthesis. Stimulates efficient translation and peptide-bond synthesis on native or reconstituted 70S ribosomes in vitro. Probably functions indirectly by altering the affinity of the ribosome for aminoacyl-tRNA, thus increasing their reactivity as acceptors for peptidyl transferase. The polypeptide is Elongation factor P (Onion yellows phytoplasma (strain OY-M)).